The sequence spans 611 residues: Leucine aminopeptidase (611 aa).

Residues 129 to 131 (QCQ) and 278 to 282 (GGMEN) each bind substrate. H305 serves as a coordination point for Zn(2+). Catalysis depends on E306, which acts as the Proton acceptor. Residues H309 and E328 each contribute to the Zn(2+) site. Y393 acts as the Proton donor in catalysis. 562 to 564 (RMK) contacts substrate.

Belongs to the peptidase M1 family. Requires Zn(2+) as cofactor.

It is found in the cytoplasm. The catalysed reaction is an epoxide + H2O = an ethanediol. Its function is as follows. Aminopeptidase that preferentially cleaves di- and tripeptides. Also has low epoxide hydrolase activity (in vitro). Can hydrolyze the epoxide leukotriene LTA(4) but it forms preferentially 5,6-dihydroxy-7,9,11,14-eicosatetraenoic acid rather than the cytokine leukotriene B(4) as the product compared to the homologous mammalian enzyme (in vitro). The protein is Leucine aminopeptidase (LKHA4) of Oryza sativa subsp. japonica (Rice).